A 258-amino-acid polypeptide reads, in one-letter code: MQEETFYSVRMRASMNGSHEDGGKHISGGERLIPFHEMKHTVNALLEKGLSHSRGKPDFMQIQFEEVYESIKTIQPLPVHTNEVSCPEEGQKLARLLLEKEGVSRDVIEKAYEQIPEWSDVRGAVLFDIHTGKRMDQTKEKGVRVSRMDWPDANFEKWALHSHVPAHSRIKEALALASKVSWHPAAVAELCWSDDPDYITGYVAGKKMGYQRITAMKEYGTEEGCRVFFIDGSNDVNTYIHDLEKQPILIEWEEDHDS.

It belongs to the BioW family. In terms of assembly, homodimer. Mg(2+) serves as cofactor.

The enzyme catalyses heptanedioate + ATP + CoA = 6-carboxyhexanoyl-CoA + AMP + diphosphate. It functions in the pathway metabolic intermediate metabolism; pimeloyl-CoA biosynthesis; pimeloyl-CoA from pimelate: step 1/1. Functionally, catalyzes the transformation of pimelate into pimeloyl-CoA with concomitant hydrolysis of ATP to AMP. This is 6-carboxyhexanoate--CoA ligase from Bacillus subtilis (strain BSn5).